The primary structure comprises 170 residues: Type II secretion system protein H (170 aa).

The propeptide at 1–5 (MRQRG) is leader sequence. Phe6 bears the N-methylphenylalanine mark. The helical transmembrane segment at 6–29 (FTLLEMMLILLLMGVSAGMVLLAF) threads the bilayer.

The protein belongs to the GSP H family. As to quaternary structure, type II secretion is composed of four main components: the outer membrane complex, the inner membrane complex, the cytoplasmic secretion ATPase and the periplasm-spanning pseudopilus. Interacts with core component PulG. Cleaved by prepilin peptidase. Post-translationally, methylated by prepilin peptidase at the amino group of the N-terminal phenylalanine once the leader sequence is cleaved by prepilin peptidase.

Its subcellular location is the cell inner membrane. Component of the type II secretion system required for the energy-dependent secretion of extracellular factors such as proteases and toxins from the periplasm. Part of the pseudopilus tip complex that is critical for the recognition and binding of secretion substrates. The sequence is that of Type II secretion system protein H (pulH) from Klebsiella pneumoniae.